The following is a 218-amino-acid chain: Ras-related protein Rab-27B (218 aa).

T2 is subject to N-acetylthreonine. Residue 16–24 coordinates GTP; that stretch reads GDSGVGKTT. An Effector region motif is present at residues 38–46; it reads FITTVGIDF. Residues 74–78, 133–136, and 163–165 each bind GTP; these read DTAGQ, NKAD, and SAA. C123 and C188 are disulfide-bonded. The disordered stretch occupies residues 194–218; it reads IPDTVNGGNSGNLDGEKPPEKKCIC. Positions 207-218 are enriched in basic and acidic residues; sequence DGEKPPEKKCIC. S-geranylgeranyl cysteine attachment occurs at residues C216 and C218. The residue at position 218 (C218) is a Cysteine methyl ester.

It belongs to the small GTPase superfamily. Rab family. As to quaternary structure, interacts with SYTL2, SYTL4, MYRIP and MLPH. Interacts with RPH3A and RPH3A. Interacts (GDP-bound form preferentially) with DENND10. Expressed primarily in testis.

The protein localises to the membrane. It localises to the late endosome. It catalyses the reaction GTP + H2O = GDP + phosphate + H(+). With respect to regulation, regulated by guanine nucleotide exchange factors (GEFs) which promote the exchange of bound GDP for free GTP, GTPase activating proteins (GAPs) which increase the GTP hydrolysis activity, and GDP dissociation inhibitors which inhibit the dissociation of the nucleotide from the GTPase. Activated by GEFs such as DENND10. Small GTPase which cycles between active GTP-bound and inactive GDP-bound states. In its active state, binds to a variety of effector proteins to regulate homeostasis of late endocytic pathway, including endosomal positioning, maturation and secretion. Plays a role in NTRK2/TRKB axonal anterograde transport by facilitating the association of NTRK2/TRKB with KLC1. May be involved in targeting uroplakins to urothelial apical membranes. In Homo sapiens (Human), this protein is Ras-related protein Rab-27B (RAB27B).